We begin with the raw amino-acid sequence, 105 residues long: Serine protease inhibitor Kazal-type 6 (105 aa).

Residues 1–23 form the signal peptide; that stretch reads MKVAGVFLLLSLALLCFFSGAFS. Q24 carries the post-translational modification Pyrrolidone carboxylic acid. In terms of domain architecture, Kazal-like spans 49 to 105; it reads RLFQINCGEFRDPKVFCTRESDPLCGSDGQTYGNKCAFCKALEKSSGKINLKHRGKC. 3 disulfide bridges follow: C55–C87, C65–C84, and C73–C105.

As to expression, expressed in the upper epidermis and in skin appendages.

It is found in the secreted. Functionally, serine protease inhibitor selective for kallikreins. Efficiently inhibits KLK5 and human KLK2, KLK4, KLK5, KLK6, KLK7, KLK12, KLK13 and KLK14. Doesn't inhibit human KLK1 and KLK8. The chain is Serine protease inhibitor Kazal-type 6 (Spink6) from Mus musculus (Mouse).